A 247-amino-acid polypeptide reads, in one-letter code: Chloride intracellular channel protein 2 (247 aa).

An N-terminal region spans residues methionine 1–leucine 94. The interval methionine 1–proline 96 is required for insertion into the membrane. Glutathione is bound at residue glutamate 25. Residues cysteine 30–cysteine 33 carry the G-site motif. Cysteine 30 and cysteine 33 form a disulfide bridge. A helical membrane pass occupies residues phenylalanine 32–valine 52. Positions asparagine 76–tyrosine 239 constitute a GST C-terminal domain. Residues alanine 95–tyrosine 106 are joint loop. The segment at lysine 107–serine 247 is C-terminal. Residues asparagine 151–arginine 171 are foot loop. Glutathione is bound at residue histidine 227.

It belongs to the chloride channel CLIC family. Monomer. Interacts with TRAPPC2 and RYR2. Expressed in adult and fetal brain, heart, skeletal muscle, liver, lung, and spleen. Detected in adult stomach and testis. Expressed in fetal thymus and kidney.

The protein localises to the cytoplasm. It localises to the membrane. It carries out the reaction chloride(in) = chloride(out). The catalysed reaction is tert-butyl hydroperoxide + 2 glutathione = tert-butanol + glutathione disulfide + H2O. The enzyme catalyses cumene hydroperoxide + 2 glutathione = 2-phenylpropan-2-ol + glutathione disulfide + H2O. Its activity is regulated as follows. The channel conductance is regulated by pH. Functionally, in the soluble state, catalyzes glutaredoxin-like thiol disulfide exchange reactions with reduced glutathione as electron donor. Displays weak glutathione peroxidase activity. Can insert into membranes and form chloride ion channels. Membrane insertion seems to be redox-regulated and may occur only under oxidizing conditions. Modulates the activity of RYR2 and inhibits calcium influx. The protein is Chloride intracellular channel protein 2 of Homo sapiens (Human).